A 299-amino-acid polypeptide reads, in one-letter code: GTPase Era (299 aa).

Residues lysine 4–glutamate 171 form the Era-type G domain. Residues glycine 12–serine 19 form a G1 region. Glycine 12–serine 19 lines the GTP pocket. The tract at residues glutamine 38–asparagine 42 is G2. The segment at aspartate 59–glycine 62 is G3. GTP is bound by residues aspartate 59 to isoleucine 63 and asparagine 121 to aspartate 124. Positions asparagine 121–aspartate 124 are G4. The G5 stretch occupies residues isoleucine 150–alanine 152. One can recognise a KH type-2 domain in the interval threonine 202–lysine 280.

It belongs to the TRAFAC class TrmE-Era-EngA-EngB-Septin-like GTPase superfamily. Era GTPase family. Monomer.

The protein resides in the cytoplasm. It is found in the cell membrane. Functionally, an essential GTPase that binds both GDP and GTP, with rapid nucleotide exchange. Plays a role in 16S rRNA processing and 30S ribosomal subunit biogenesis and possibly also in cell cycle regulation and energy metabolism. The polypeptide is GTPase Era (Streptococcus pneumoniae (strain JJA)).